The sequence spans 129 residues: Large ribosomal subunit protein uL22 (129 aa).

This sequence belongs to the universal ribosomal protein uL22 family. In terms of assembly, part of the 50S ribosomal subunit.

Functionally, this protein binds specifically to 23S rRNA; its binding is stimulated by other ribosomal proteins, e.g. L4, L17, and L20. It is important during the early stages of 50S assembly. It makes multiple contacts with different domains of the 23S rRNA in the assembled 50S subunit and ribosome. Its function is as follows. The globular domain of the protein is located near the polypeptide exit tunnel on the outside of the subunit, while an extended beta-hairpin is found that lines the wall of the exit tunnel in the center of the 70S ribosome. In Brucella suis biovar 1 (strain 1330), this protein is Large ribosomal subunit protein uL22.